A 320-amino-acid chain; its full sequence is HPr kinase/phosphorylase (320 aa).

Residues His139 and Lys160 contribute to the active site. 154 to 161 (GDSGVGKS) serves as a coordination point for ATP. A Mg(2+)-binding site is contributed by Ser161. Asp178 serves as the catalytic Proton acceptor; for phosphorylation activity. Proton donor; for dephosphorylation activity. Residues 202-211 (MEIRGIGIID) are important for the catalytic mechanism of both phosphorylation and dephosphorylation. A Mg(2+)-binding site is contributed by Glu203. Arg244 is an active-site residue. Residues 265–270 (PVKTGR) are important for the catalytic mechanism of dephosphorylation.

This sequence belongs to the HPrK/P family. Homohexamer. It depends on Mg(2+) as a cofactor.

The catalysed reaction is [HPr protein]-L-serine + ATP = [HPr protein]-O-phospho-L-serine + ADP + H(+). It catalyses the reaction [HPr protein]-O-phospho-L-serine + phosphate + H(+) = [HPr protein]-L-serine + diphosphate. Its function is as follows. Catalyzes the ATP- as well as the pyrophosphate-dependent phosphorylation of a specific serine residue in HPr, a phosphocarrier protein of the phosphoenolpyruvate-dependent sugar phosphotransferase system (PTS). HprK/P also catalyzes the pyrophosphate-producing, inorganic phosphate-dependent dephosphorylation (phosphorolysis) of seryl-phosphorylated HPr (P-Ser-HPr). The two antagonistic activities of HprK/P are regulated by several intracellular metabolites, which change their concentration in response to the absence or presence of rapidly metabolisable carbon sources (glucose, fructose, etc.) in the growth medium. Therefore, by controlling the phosphorylation state of HPr, HPrK/P is a sensor enzyme that plays a major role in the regulation of carbon metabolism and sugar transport: it mediates carbon catabolite repression (CCR), and regulates PTS-catalyzed carbohydrate uptake and inducer exclusion. The sequence is that of HPr kinase/phosphorylase from Limosilactobacillus reuteri (strain DSM 20016) (Lactobacillus reuteri).